The primary structure comprises 389 residues: DNA damage checkpoint control protein RAD17 (389 aa).

A disordered region spans residues 358-389 (LAPPSAFPAEETQDPDESYHPAPSNTDIPLFL). Positions 380–389 (PSNTDIPLFL) are enriched in polar residues.

The protein belongs to the rad1 family. Component of the checkpoint clamp complex composed of DDC1, MEC3 and RAD17.

Its subcellular location is the nucleus. In terms of biological role, component of the checkpoint clamp complex involved in the surveillance mechanism that allows the DNA repair pathways to act to restore the integrity of the DNA prior to DNA synthesis or separation of the replicated chromosomes. The protein is DNA damage checkpoint control protein RAD17 (RAD17) of Eremothecium gossypii (strain ATCC 10895 / CBS 109.51 / FGSC 9923 / NRRL Y-1056) (Yeast).